A 263-amino-acid chain; its full sequence is Post-GPI attachment to proteins factor 2 (263 aa).

The next 6 membrane-spanning stretches (helical) occupy residues 16 to 36, 69 to 89, 109 to 129, 143 to 163, 180 to 200, and 208 to 228; these read FVFC…LLSL, YIWR…AVAF, FLCN…LALT, CFGG…WLFS, YKIL…YLYW, and PGIY…NIFF.

Belongs to the PGAP2 family.

The protein resides in the golgi apparatus membrane. It localises to the endoplasmic reticulum membrane. Its function is as follows. Involved in the lipid remodeling steps of GPI-anchor maturation. Required for stable expression of GPI-anchored proteins at the cell surface. This is Post-GPI attachment to proteins factor 2 from Caenorhabditis briggsae.